We begin with the raw amino-acid sequence, 209 residues long: Ribonuclease HII (209 aa).

Positions 20 to 209 constitute an RNase H type-2 domain; sequence QLEIGIDEVG…KSFLTKLNLI (190 aa). 3 residues coordinate a divalent metal cation: aspartate 26, glutamate 27, and aspartate 122.

The protein belongs to the RNase HII family. It depends on Mn(2+) as a cofactor. Mg(2+) serves as cofactor.

It localises to the cytoplasm. It carries out the reaction Endonucleolytic cleavage to 5'-phosphomonoester.. Functionally, endonuclease that specifically degrades the RNA of RNA-DNA hybrids. The polypeptide is Ribonuclease HII (Prochlorococcus marinus (strain MIT 9515)).